The primary structure comprises 329 residues: tRNA(Ile)-lysidine synthase (329 aa).

Residue 37–42 coordinates ATP; the sequence is SGGSDS.

Belongs to the tRNA(Ile)-lysidine synthase family.

The protein resides in the cytoplasm. It catalyses the reaction cytidine(34) in tRNA(Ile2) + L-lysine + ATP = lysidine(34) in tRNA(Ile2) + AMP + diphosphate + H(+). Its function is as follows. Ligates lysine onto the cytidine present at position 34 of the AUA codon-specific tRNA(Ile) that contains the anticodon CAU, in an ATP-dependent manner. Cytidine is converted to lysidine, thus changing the amino acid specificity of the tRNA from methionine to isoleucine. The sequence is that of tRNA(Ile)-lysidine synthase from Zymomonas mobilis subsp. mobilis (strain ATCC 31821 / ZM4 / CP4).